We begin with the raw amino-acid sequence, 430 residues long: Phosphoribosylamine--glycine ligase (430 aa).

The ATP-grasp domain maps to 109–314 (RGLMNKYGID…FLTIAEHIIN (206 aa)). 136-192 (IREYPGDLAVKPTGLTGGKGVKVMGEQVDREGAVEYAMTLKDQVIILEERLLGEEFT) is a binding site for ATP. Mg(2+) contacts are provided by Gln272, Glu284, and Asn286. Residues Gln272, Glu284, and Asn286 each coordinate Mn(2+).

It belongs to the GARS family. Requires Mg(2+) as cofactor. Mn(2+) serves as cofactor.

It carries out the reaction 5-phospho-beta-D-ribosylamine + glycine + ATP = N(1)-(5-phospho-beta-D-ribosyl)glycinamide + ADP + phosphate + H(+). It functions in the pathway purine metabolism; IMP biosynthesis via de novo pathway; N(1)-(5-phospho-D-ribosyl)glycinamide from 5-phospho-alpha-D-ribose 1-diphosphate: step 2/2. The sequence is that of Phosphoribosylamine--glycine ligase from Methanocorpusculum labreanum (strain ATCC 43576 / DSM 4855 / Z).